A 2179-amino-acid polypeptide reads, in one-letter code: FRAS1-related extracellular matrix protein 1 (2179 aa).

Residues 1–21 form the signal peptide; it reads MNSLSWGAANAVLLLLLLAWA. The short motif at 199 to 201 is the Cell attachment site element; it reads RGD. 3 CSPG repeats span residues 296 to 390, 413 to 500, and 521 to 615; these read KAAF…LEVY, APRV…FRIF, and PPFL…FVLW. N-linked (GlcNAc...) asparagine glycosylation is present at Asn335. N-linked (GlcNAc...) asparagine glycans are attached at residues Asn560 and Asn622. CSPG repeat units lie at residues 642 to 754, 776 to 867, and 887 to 982; these read KEAP…FSVS, QVPE…LEVT, and EPPV…LVVS. N-linked (GlcNAc...) asparagine glycosylation is present at Asn1014. 6 CSPG repeats span residues 1024 to 1126, 1147 to 1254, 1275 to 1372, 1393 to 1485, 1506 to 1596, and 1628 to 1724; these read PPSI…VYVT, EAPD…IQLS, KPML…FYLW, GDIV…FIIS, LPVV…FMAT, and PRIT…FQIM. N-linked (GlcNAc...) asparagine glycosylation occurs at Asn1566. The region spanning 1731 to 1830 is the Calx-beta domain; that stretch reads ATPQILELKW…DDEVFEVILN (100 aa). The Cell attachment site motif lies at 1907 to 1909; sequence RGD. Residues 2060–2174 enclose the C-type lectin domain; that stretch reads HSGYCHILIT…CRRAKPHNYV (115 aa). Residues Cys2151 and Cys2165 are joined by a disulfide bond.

The protein belongs to the FRAS1 family. As to quaternary structure, interacts with FREM2.

Its subcellular location is the secreted. The protein localises to the extracellular space. It is found in the extracellular matrix. It localises to the basement membrane. Functionally, extracellular matrix protein that plays a role in epidermal differentiation and is required for epidermal adhesion during embryonic development. The protein is FRAS1-related extracellular matrix protein 1 of Homo sapiens (Human).